Here is a 251-residue protein sequence, read N- to C-terminus: Enolase-phosphatase E1 (251 aa).

Mg(2+) contacts are provided by Asp-13 and Glu-15. Substrate is bound by residues 137–138 (SS) and Lys-183. Asp-210 contributes to the Mg(2+) binding site.

It belongs to the HAD-like hydrolase superfamily. MasA/MtnC family. In terms of assembly, monomer. Mg(2+) is required as a cofactor.

The protein resides in the cytoplasm. It is found in the nucleus. It catalyses the reaction 5-methylsulfanyl-2,3-dioxopentyl phosphate + H2O = 1,2-dihydroxy-5-(methylsulfanyl)pent-1-en-3-one + phosphate. Its pathway is amino-acid biosynthesis; L-methionine biosynthesis via salvage pathway; L-methionine from S-methyl-5-thio-alpha-D-ribose 1-phosphate: step 3/6. It participates in amino-acid biosynthesis; L-methionine biosynthesis via salvage pathway; L-methionine from S-methyl-5-thio-alpha-D-ribose 1-phosphate: step 4/6. Its function is as follows. Bifunctional enzyme that catalyzes the enolization of 2,3-diketo-5-methylthiopentyl-1-phosphate (DK-MTP-1-P) into the intermediate 2-hydroxy-3-keto-5-methylthiopentenyl-1-phosphate (HK-MTPenyl-1-P), which is then dephosphorylated to form the acireductone 1,2-dihydroxy-3-keto-5-methylthiopentene (DHK-MTPene). The chain is Enolase-phosphatase E1 from Candida glabrata (strain ATCC 2001 / BCRC 20586 / JCM 3761 / NBRC 0622 / NRRL Y-65 / CBS 138) (Yeast).